Reading from the N-terminus, the 968-residue chain is RNA polymerase-associated protein RapA (968 aa).

The Helicase ATP-binding domain occupies 164-334 (DVGRRHAPRV…FARLRLLDPN (171 aa)). 177–184 (DEVGLGKT) contacts ATP. The short motif at 280–283 (DEAH) is the DEAH box element. One can recognise a Helicase C-terminal domain in the interval 490–644 (RVEWLMGYLT…TCPTGRTVYD (155 aa)).

The protein belongs to the SNF2/RAD54 helicase family. RapA subfamily. Interacts with the RNAP. Has a higher affinity for the core RNAP than for the holoenzyme. Its ATPase activity is stimulated by binding to RNAP.

Functionally, transcription regulator that activates transcription by stimulating RNA polymerase (RNAP) recycling in case of stress conditions such as supercoiled DNA or high salt concentrations. Probably acts by releasing the RNAP, when it is trapped or immobilized on tightly supercoiled DNA. Does not activate transcription on linear DNA. Probably not involved in DNA repair. The sequence is that of RNA polymerase-associated protein RapA from Klebsiella pneumoniae (strain 342).